The primary structure comprises 545 residues: Cytochrome P450 monooxygenase sdnB (545 aa).

The N-linked (GlcNAc...) asparagine glycan is linked to Asn5. A helical transmembrane segment spans residues 30-50 (SILALTPLQGIALFLCLFWGY). Asn276 carries N-linked (GlcNAc...) asparagine glycosylation. Residues 322 to 342 (LPILILIILVPAAHTTAMGIS) traverse the membrane as a helical segment. N-linked (GlcNAc...) asparagine glycosylation is found at Asn393 and Asn476. Residue Cys486 coordinates heme.

The protein belongs to the cytochrome P450 family. Heme serves as cofactor.

Its subcellular location is the membrane. It participates in antibiotic biosynthesis. In terms of biological role, cytochrome P450 monooxygenase; part of the gene cluster that mediates the biosynthesis of sordarin and hypoxysordarin, glycoside antibiotics with a unique tetracyclic diterpene aglycone structure. First, the geranylgeranyl diphosphate synthase sdnC constructs GGDP from farnesyl diphosphate and isopentenyl diphosphate. The diterpene cyclase sdnA then catalyzes the cyclization of GGDP to afford cycloaraneosene. Cycloaraneosene is then hydroxylated four times by the putative cytochrome P450 monooxygenases sdnB, sdnE, sdnF and sdnH to give a hydroxylated cycloaraneosene derivative such as cycloaraneosene-8,9,13,19-tetraol. Although the order of the hydroxylations is unclear, at least C8, C9 and C13 of the cycloaraneosene skeleton are hydroxylated before the sordaricin formation. Dehydration of the 13-hydroxy group of the hydroxylated cycloaraneosene derivative might be catalyzed by an unassigned hypothetical protein such as sdnG and sdnP to construct the cyclopentadiene moiety. The FAD-dependent oxidoreductase sdnN is proposed to catalyze the oxidation at C9 of the hydroxylated cycloaraneosene derivative and also catalyze the Baeyer-Villiger oxidation to give the lactone intermediate. The presumed lactone intermediate would be hydrolyzed to give an acrolein moiety and a carboxylate moiety. Then, [4+2]cycloaddition would occur between the acrolein moiety and the cyclopentadiene moiety to give sordaricin. SdnN might also be involved in the [4+2]cycloaddition after the hypothesized oxidation to accommodate the oxidized product and prompt the [4+2]cycloaddition. GDP-6-deoxy-D-altrose may be biosynthesized from GDP-D-mannose by the putative GDP-mannose-4,6-dehydratase sdnI and the short-chain dehydrogenase sdnK. The glycosyltransferase sdnJ catalyzes the attachment of 6-deoxy-D-altrose onto the 19-hydroxy group of sordaricin to give 4'-O-demethylsordarin. The methyltransferase sdnD would complete the biosynthesis of sordarin. Sordarin can be further modified into hypoxysordarin. The unique acyl chain at the 3'-hydroxy group of hypoxysordarin would be constructed by an iterative type I PKS sdnO and the trans-acting polyketide methyltransferase sdnL. SdnL would be responsible for the introduction of an alpha-methyl group of the polyketide chain. Alternatively, the beta-lactamase-like protein sdnR might be responsible for the cleavage and transfer of the polyketide chain from the PKS sdnO to sordarin. Two putative cytochrome P450 monooxygenases, sdnQ and sdnT, might catalyze the epoxidations of the polyketide chain to complete the biosynthesis of hypoxysordarin. Transcriptional regulators sdnM and sdnS are presumably encoded for the transcriptional regulation of the expression of the sdn gene cluster. This is Cytochrome P450 monooxygenase sdnB from Sordaria araneosa (Pleurage araneosa).